A 154-amino-acid polypeptide reads, in one-letter code: UPF0756 membrane protein BPUM_2558 (154 aa).

Helical transmembrane passes span 8–28, 54–74, 87–107, and 117–137; these read FLVL…ILAV, WGVT…DIGF, WIAL…IVLL, and LVFG…GPLI.

The protein belongs to the UPF0756 family.

The protein resides in the cell membrane. The sequence is that of UPF0756 membrane protein BPUM_2558 from Bacillus pumilus (strain SAFR-032).